The primary structure comprises 82 residues: MFEKKKRLGLIVYLYYNRDARKLNKYGNVVYHSRRMRYSVLYIAQDETDKIIEEIGALKFVKKVLPSYIDTIDQNFVGSLMR.

This sequence belongs to the UPF0298 family.

It is found in the cytoplasm. This chain is UPF0298 protein SMU_1670c, found in Streptococcus mutans serotype c (strain ATCC 700610 / UA159).